A 265-amino-acid chain; its full sequence is MQPDLHCRTLAAHTLKHFRALSPLTHCMTNDVVQTFTANTLLALGASPAMVIDPVEARPFAAIANALLVNVGTLTASRADAMRATVESAYDAKIPWTLDPVAVGALEFRRRFCLDLLSLRPAAIRGNASEILALSGMALGGRGVDTTEAALAALPAAQALARQIDCIVVVTGEIDYVTNGQRTLSIPGGDPLMTRIVGTGCALSAVVAASCALPGAALDNVASACCWMKLAGQAAAERSEGPGSFIPAFLDALYHLDVEAANATN.

A substrate-binding site is contributed by Met-50. Positions 125 and 171 each coordinate ATP. Substrate is bound at residue Gly-198.

It belongs to the Thz kinase family. Requires Mg(2+) as cofactor.

The enzyme catalyses 5-(2-hydroxyethyl)-4-methylthiazole + ATP = 4-methyl-5-(2-phosphooxyethyl)-thiazole + ADP + H(+). It functions in the pathway cofactor biosynthesis; thiamine diphosphate biosynthesis; 4-methyl-5-(2-phosphoethyl)-thiazole from 5-(2-hydroxyethyl)-4-methylthiazole: step 1/1. Catalyzes the phosphorylation of the hydroxyl group of 4-methyl-5-beta-hydroxyethylthiazole (THZ). This is Hydroxyethylthiazole kinase from Salmonella paratyphi B (strain ATCC BAA-1250 / SPB7).